The chain runs to 570 residues: PTS system lactose-specific EIICB component (570 aa).

A PTS EIIC type-3 domain is found at I9–F410. The next 9 membrane-spanning stretches (helical) occupy residues G31 to V51, A65 to T85, I104 to P124, A133 to V153, F178 to I198, G223 to H243, M283 to W303, V340 to V360, and I382 to V402. Positions Q467–N570 constitute a PTS EIIB type-3 domain. C474 acts as the Phosphocysteine intermediate; for EIIB activity in catalysis. C474 carries the post-translational modification Phosphocysteine; by EIIA.

The protein resides in the cell membrane. It carries out the reaction lactose(out) + N(pros)-phospho-L-histidyl-[protein] = lactose 6-phosphate(in) + L-histidyl-[protein]. Its function is as follows. The phosphoenolpyruvate-dependent sugar phosphotransferase system (sugar PTS), a major carbohydrate active transport system, catalyzes the phosphorylation of incoming sugar substrates concomitantly with their translocation across the cell membrane. The enzyme II LacEF PTS system is involved in lactose transport. The protein is PTS system lactose-specific EIICB component of Staphylococcus aureus (strain N315).